A 374-amino-acid polypeptide reads, in one-letter code: Queuine tRNA-ribosyltransferase (374 aa).

Catalysis depends on aspartate 89, which acts as the Proton acceptor. Residues 89–93, aspartate 143, glutamine 187, and glycine 214 each bind substrate; that span reads DSGGF. Residues 245–251 form an RNA binding region; sequence GVGKPED. The Nucleophile role is filled by aspartate 264. An RNA binding; important for wobble base 34 recognition region spans residues 269-273; sequence TRNAR. Zn(2+) is bound by residues cysteine 302, cysteine 304, cysteine 307, and histidine 333.

Belongs to the queuine tRNA-ribosyltransferase family. As to quaternary structure, homodimer. Within each dimer, one monomer is responsible for RNA recognition and catalysis, while the other monomer binds to the replacement base PreQ1. It depends on Zn(2+) as a cofactor.

It catalyses the reaction 7-aminomethyl-7-carbaguanine + guanosine(34) in tRNA = 7-aminomethyl-7-carbaguanosine(34) in tRNA + guanine. Its pathway is tRNA modification; tRNA-queuosine biosynthesis. Its function is as follows. Catalyzes the base-exchange of a guanine (G) residue with the queuine precursor 7-aminomethyl-7-deazaguanine (PreQ1) at position 34 (anticodon wobble position) in tRNAs with GU(N) anticodons (tRNA-Asp, -Asn, -His and -Tyr). Catalysis occurs through a double-displacement mechanism. The nucleophile active site attacks the C1' of nucleotide 34 to detach the guanine base from the RNA, forming a covalent enzyme-RNA intermediate. The proton acceptor active site deprotonates the incoming PreQ1, allowing a nucleophilic attack on the C1' of the ribose to form the product. After dissociation, two additional enzymatic reactions on the tRNA convert PreQ1 to queuine (Q), resulting in the hypermodified nucleoside queuosine (7-(((4,5-cis-dihydroxy-2-cyclopenten-1-yl)amino)methyl)-7-deazaguanosine). The polypeptide is Queuine tRNA-ribosyltransferase (Shewanella oneidensis (strain ATCC 700550 / JCM 31522 / CIP 106686 / LMG 19005 / NCIMB 14063 / MR-1)).